We begin with the raw amino-acid sequence, 303 residues long: Glucose-1-phosphate thymidylyltransferase (303 aa).

Mg(2+)-binding residues include D108 and D222.

This sequence belongs to the glucose-1-phosphate thymidylyltransferase family. It depends on Mg(2+) as a cofactor.

It carries out the reaction dTTP + alpha-D-glucose 1-phosphate + H(+) = dTDP-alpha-D-glucose + diphosphate. Functionally, catalyzes the formation of dTDP-glucose, from dTTP and glucose 1-phosphate, as well as its pyrophosphorolysis. Its function is as follows. Probably involved in the biosynthesis of the acarviose moiety of the alpha-glucosidase inhibitor acarbose. This chain is Glucose-1-phosphate thymidylyltransferase (acbA), found in Actinoplanes sp. (strain ATCC 31044 / CBS 674.73 / SE50/110).